Reading from the N-terminus, the 279-residue chain is MTNIHPTAIIEPGAKIGRNVVIEPYVVIKSTVTLCDDVVVKSYAYIDGYTTIGRGTTIWPSAMIGNKPQDLKYQGEKTYVTIGENCEIREFAIITSSTFEGTTVSIGNNCLIMPWAHVAHNCTIGNHVVLSNHAQLAGHVVVEDYAIIGGMVGVHQFVRIGAHAMVGALSGVRRDVPPYTIGTGNPYQLGGINKVGLQRRQVGFEIRLALIKVFKKVYRSEDGFFEALLEAQEEYGHIPEVQNFIHFCRNPSKRGIERGAAKEAFQEESVDKEGALVES.

The tract at residues 260–279 (AAKEAFQEESVDKEGALVES) is disordered.

Belongs to the transferase hexapeptide repeat family. LpxA subfamily. Homotrimer.

The protein resides in the cytoplasm. It catalyses the reaction a (3R)-hydroxyacyl-[ACP] + UDP-N-acetyl-alpha-D-glucosamine = a UDP-3-O-[(3R)-3-hydroxyacyl]-N-acetyl-alpha-D-glucosamine + holo-[ACP]. It participates in glycolipid biosynthesis; lipid IV(A) biosynthesis; lipid IV(A) from (3R)-3-hydroxytetradecanoyl-[acyl-carrier-protein] and UDP-N-acetyl-alpha-D-glucosamine: step 1/6. In terms of biological role, involved in the biosynthesis of lipid A, a phosphorylated glycolipid that anchors the lipopolysaccharide to the outer membrane of the cell. The polypeptide is Acyl-[acyl-carrier-protein]--UDP-N-acetylglucosamine O-acyltransferase (Chlamydia abortus (strain DSM 27085 / S26/3) (Chlamydophila abortus)).